Consider the following 472-residue polypeptide: Bone morphogenetic protein 3 (472 aa).

A signal peptide spans 1–22 (MAGASRLLFLWLGCFCVSLAQG). The propeptide occupies 23–362 (ERPKPPFPEL…EQTLKKARRK (340 aa)). Basic and acidic residues predominate over residues 27–37 (PPFPELRKAVP). The segment at 27–53 (PPFPELRKAVPGDRTAGGGPDSELQPQ) is disordered. N117, N141, N175, and N220 each carry an N-linked (GlcNAc...) asparagine glycan. Residues 320 to 350 (PYKTLQAQAPEKSKNKKKQRKGPHRKSQTLQ) form a disordered region. Residues 333-346 (KNKKKQRKGPHRKS) show a composition bias toward basic residues. 3 disulfides stabilise this stretch: C370/C437, C399/C469, and C403/C471. The N-linked (GlcNAc...) asparagine glycan is linked to N463.

This sequence belongs to the TGF-beta family. Homodimer; disulfide-linked. Interacts with type II receptor ACVR2B. Expressed in adult and fetal cartilage.

The protein localises to the secreted. Functionally, growth factor of the TGF-beta superfamily that plays an essential role in developmental process by inducing and patterning early skeletal formation and by negatively regulating bone density. Antagonizes the ability of certain osteogenic BMPs to induce osteoprogenitor differentiation and ossification. Initiates signaling cascades by associating with type II receptor ACVR2B to activate SMAD2-dependent and SMAD-independent signaling cascades including TAK1 and JNK pathways. This chain is Bone morphogenetic protein 3 (BMP3), found in Homo sapiens (Human).